A 386-amino-acid polypeptide reads, in one-letter code: Adiponectin receptor protein 2 (386 aa).

A disordered region spans residues 1 to 71 (MNEPTENRLG…HEYSDEAPQE (71 aa)). Residues 1–147 (MNEPTENRLG…SIFRIHTETG (147 aa)) lie on the Cytoplasmic side of the membrane. Over residues 15–41 (PEPDIRLRKGHQLDGTRRGDNDSHQGD) the composition is skewed to basic and acidic residues. The chain crosses the membrane as a helical span at residues 148 to 168 (NIWTHLLGCVFFLCLGIFYMF). Residues 169–181 (RPNISFVAPLQEK) lie on the Extracellular side of the membrane. A helical transmembrane segment spans residues 182–202 (VVFGLFFLGAILCLSFSWLFH). Histidine 202 contacts Zn(2+). At 203–213 (TVYCHSEGVSR) the chain is on the cytoplasmic side. Residues 214-234 (LFSKLDYSGIALLIMGSFVPW) form a helical membrane-spanning segment. Residues 235–245 (LYYSFYCNPQP) are Extracellular-facing. A helical transmembrane segment spans residues 246-266 (CFIYLIVICVLGIAAIIVSQW). Residues 267–273 (DMFATPQ) are Cytoplasmic-facing. Residues 274–294 (YRGVRAGVFLGLGLSGIIPTL) form a helical membrane-spanning segment. Topologically, residues 295–309 (HYVISEGFLKAATIG) are extracellular. Residues 310–330 (QIGWLMLMASLYITGAALYAA) traverse the membrane as a helical segment. The Cytoplasmic segment spans residues 331 to 348 (RIPERFFPGKCDIWFHSH). Positions 348 and 352 each coordinate Zn(2+). The chain crosses the membrane as a helical span at residues 349–369 (QLFHIFVVAGAFVHFHGVSNL). Over 370 to 386 (QEFRFMIGGGCSEEDAL) the chain is Extracellular.

This sequence belongs to the ADIPOR family. In terms of assembly, may form homooligomers and heterooligomers with ADIPOR1. Interacts with APPL2 (via BAR domain); ADIPOQ dissociates this interaction. Ubiquitous. Highly expressed in skeletal muscle, liver and placenta. Weakly expressed in brain, heart, colon, spleen, kidney, thymus, small intestine, peripheral blood leukocytes and lung.

The protein localises to the cell membrane. Functionally, receptor for ADIPOQ, an essential hormone secreted by adipocytes that regulates glucose and lipid metabolism. Required for normal body fat and glucose homeostasis. ADIPOQ-binding activates a signaling cascade that leads to increased PPARA activity, and ultimately to increased fatty acid oxidation and glucose uptake. Has intermediate affinity for globular and full-length adiponectin. Required for normal revascularization after chronic ischemia caused by severing of blood vessels. This chain is Adiponectin receptor protein 2, found in Homo sapiens (Human).